The sequence spans 823 residues: MEKSLFDTKNLKITPMMKQYLDIKDKYKDSILLFRLGDFYEAFFDDALTVSKILNIVLTKRQDAPMAGIPYHALDNYLKKLVDAGYKVAICEQMEDPALAKGIVKREVTRVITPGTIIEDELLTTENNYMMSLYETKDGKISCILTDSSTGEVIIKQMESIDEISDFLQTHRVSQIICPENFYDKIVNIARVLGIFVDKLDDWYYENDIQTIKEAYGLVSIEHFELGEASKPLCATIKYINYTLNRQAKLKVPKTLDESKYMTLDSTTVENLSLIPGDKGKNLYDVLNKTNTPMGGRLLKWVILHPLKDRNEIEKRLWYVEAFYEDPLLTNEIREYLNGVYDLERIINRLEYDSAKPKDLISLKTTLEVVEPIKEALSTNEKLIQLAQMLPDLSQIKVKIENTLLEEFEGELGEGKIIKEGVSKELDEYRELLYHSNEKLKEFEERERAKTGIQKLKVSFNNVFGYYIEIPKGQVKFAPQEYTRIQTLVNAERYTTTELKEFEQKILAAKEKVEILEKTIFKQICDELKGYTQDLRKLAEMLSWIDVYSNFAYVSKLYSYSKPEISDSEFKVLNGRHPVVERFVDEFVPNDIYMSDELRMYILTGPNMSGKSTYIRQVGLIALMTQIGCFVPAQYAKVPVFDRIFTRMGARDDISTGKSTFLTEMNEVALILSKATQKSLVLLDEVGRGTSTFDGISIAWAMSEYIYNEIKCKTIFATHFTELTELSEGYSGIKNLTVDVKETPDGVVFLHKVVEGVADRSYGIEVAAIAGLPESIIERAKEILNIIVEKSDLEKKVGVLKEGQMKKIKATKKSVPEGQMKLF.

605–612 (GPNMSGKS) contacts ATP.

The protein belongs to the DNA mismatch repair MutS family.

Its function is as follows. This protein is involved in the repair of mismatches in DNA. It is possible that it carries out the mismatch recognition step. This protein has a weak ATPase activity. This is DNA mismatch repair protein MutS from Fervidobacterium nodosum (strain ATCC 35602 / DSM 5306 / Rt17-B1).